The chain runs to 333 residues: Complement C1q and tumor necrosis factor-related protein 9B (333 aa).

The N-terminal stretch at 1–19 (MRIWWLLLAIEICTGNINS) is a signal peptide. 3 consecutive Collagen-like domains span residues 24–82 (RQGH…DGKV), 95–154 (GSPG…PGPM), and 155–191 (GPIG…GEKG). Positions 24-189 (RQGHPGIPGN…IRGWKGDRGE (166 aa)) are disordered. Low complexity predominate over residues 26–40 (GHPGIPGNPGHNGLP). Basic and acidic residues-rich tracts occupy residues 42–55 (RDGR…KGDA) and 69–88 (TSGE…KGIK). One can recognise a C1q domain in the interval 197-333 (LVLPKSAFTV…FTGFLLFSSQ (137 aa)).

As to quaternary structure, interacts with CTRP9A and ADIPOQ. Forms heterotrimers and heterooligomeric complexes with CTRP9A. As to expression, expressed at low levels. Not expressed in adipose tissues.

Its subcellular location is the secreted. Functionally, probable adipokine. Activates AMPK, AKT, and p44/42 MAPK signaling pathways. This is Complement C1q and tumor necrosis factor-related protein 9B (C1QTNF9B) from Homo sapiens (Human).